A 292-amino-acid polypeptide reads, in one-letter code: Acetylglutamate kinase (292 aa).

Substrate contacts are provided by residues 64-65 (GG), Arg86, and Asn190.

It belongs to the acetylglutamate kinase family. ArgB subfamily.

It is found in the cytoplasm. The enzyme catalyses N-acetyl-L-glutamate + ATP = N-acetyl-L-glutamyl 5-phosphate + ADP. It functions in the pathway amino-acid biosynthesis; L-arginine biosynthesis; N(2)-acetyl-L-ornithine from L-glutamate: step 2/4. Its function is as follows. Catalyzes the ATP-dependent phosphorylation of N-acetyl-L-glutamate. This is Acetylglutamate kinase from Geobacter sulfurreducens (strain ATCC 51573 / DSM 12127 / PCA).